Here is a 382-residue protein sequence, read N- to C-terminus: F-box/kelch-repeat protein KIB1 (382 aa).

Residues 22 to 69 (SKHSILAVDLVRLILERLSFVDFHRARCVSSIWYIASKTVIGVTNPTT) enclose the F-box domain. Kelch repeat units follow at residues 73 to 117 (ILFP…ASSG), 159 to 209 (VLWV…FKEN), and 259 to 306 (IVAK…ITVE).

Part of a SCF (SKP1-cullin-F-box) protein ligase complex. Binds directly to several GSK3 family proteins such as SKP1A/ASK1, ASK1/SK11, ASK3/SK12, ASK5/SK13, ASK7/BIN2/SK21, ASK9/SK22 and ASK6/SK23. Interacts with ASK7/BIN2/SK21 in a brassinosteroid (BR)-dependent manner. In terms of tissue distribution, expressed in seedlings, leaves, stems, flower buds and flowers.

The protein resides in the cytoplasm. It is found in the nucleus. Its subcellular location is the nucleolus. Functionally, component of SCF(ASK-cullin-F-box) E3 ubiquitin ligase complexes, which may mediate the ubiquitination and subsequent proteasomal degradation of target proteins. Required for brassinosteroid (BR) signal transduction. Mediates ASK7/BIN2/SK21 inactivation both by competing with substrate binding (e.g. BZR1) and by promoting its ubiquitination and subsequent proteasomal degradation. The polypeptide is F-box/kelch-repeat protein KIB1 (Arabidopsis thaliana (Mouse-ear cress)).